Reading from the N-terminus, the 282-residue chain is Glutamate racemase (282 aa).

Substrate contacts are provided by residues 13-14 and 45-46; these read DS and YG. Cys-76 functions as the Proton donor/acceptor in the catalytic mechanism. 77 to 78 lines the substrate pocket; the sequence is NT. Residue Cys-186 is the Proton donor/acceptor of the active site. Residue 187–188 participates in substrate binding; it reads TH.

It belongs to the aspartate/glutamate racemases family.

It carries out the reaction L-glutamate = D-glutamate. The protein operates within cell wall biogenesis; peptidoglycan biosynthesis. Functionally, provides the (R)-glutamate required for cell wall biosynthesis. The protein is Glutamate racemase of Ralstonia pickettii (strain 12J).